A 521-amino-acid polypeptide reads, in one-letter code: Zinc finger protein 394 (521 aa).

The disordered stretch occupies residues 1–45 (MAAGSGVVPPPLGAGLCTVKVEEDSPGNQESSGSGDWQNPETSRK). K20 participates in a covalent cross-link: Glycyl lysine isopeptide (Lys-Gly) (interchain with G-Cter in SUMO2). Positions 26 to 41 (PGNQESSGSGDWQNPE) are enriched in polar residues. The 96-residue stretch at 38-133 (QNPETSRKQF…RALDRASPQG (96 aa)) folds into the SCAN box domain. In terms of domain architecture, KRAB spans 135 to 196 (MTFKDVAESL…KQEILKEAEP (62 aa)). Residue K259 forms a Glycyl lysine isopeptide (Lys-Gly) (interchain with G-Cter in SUMO2) linkage. 3 consecutive C2H2-type zinc fingers follow at residues 327–349 (YKCDSCEKGFRQRSDLFKHQRIH), 355–377 (YQCQECGKRFSQSAALVKHQRTH), and 383–405 (YACPECGECFRQSSHLSRHQRTH). The C2H2-type 4; atypical zinc-finger motif lies at 411-432 (YKCEECGEIVHVSSLFRHQRLH). K412 is covalently cross-linked (Glycyl lysine isopeptide (Lys-Gly) (interchain with G-Cter in SUMO2)). C2H2-type zinc fingers lie at residues 438–460 (YKCGDCEKSFRQRSDLFKHQRTH), 466–488 (YACVVCGRRFSQSATLIKHQRTH), and 494–516 (YKCFQCGERFRQSTHLVRHQRIH).

This sequence belongs to the krueppel C2H2-type zinc-finger protein family. As to expression, expressed at high level in testis.

It localises to the nucleus. Its function is as follows. May be involved in transcriptional regulation. The polypeptide is Zinc finger protein 394 (Znf394) (Mus musculus (Mouse)).